Consider the following 754-residue polypeptide: MTILTHTLGFPRVGLRRELKKAQESYWAGNATREELLAVGRELRARHWQQQKQAGIDLLPVGDFAWYDHVLTTSLLLGNVPARHQNNDGSVDIDTLFRIGRGRAPTGEPAAAAEMTKWFNTNYHYMVPEFSKGQQFRLTWTQLLEEVDEALALGHKIKPVLLGPVTYLWLGKVKGEPFDRLTLLKDILPVYQHVLAELAKRGIEWVQIDEPALVLELPQAWLDAFKLAYDALAGQVKLLLTTYFEGVTPNLNTIIALPVQGLHVDLIHGKDDVSELHQRLPADWLLSAGLINGRNVWRADLPEKYAQINDIVGKRALWVSSSCSLLHSPIDLSVETRLDAEVKSWFAFALQKCGELALLRDALNSGDTAAVTEWSAPIQARRHSTRVHNVGVEKRLAAITAQDSQRENPYEVRAEAQRARFKLPAWPTTTIGSFPQTTEIRGLRLDFKKGNLDANHYRTGIAEHIRQAIIEQERLGLDVLVHGEAERNDMVEYFGEHLDGFVFTQNGWVQSYGSRCVKPPVVIGDISRPAPITVEWAKYAQSLTDKPVKGMLTGPVTILCWSFPREDVTRETIAKQIALALRDEVADLEAAGIGIIQIDEPALREGLPLRRSDWDAYLAWGVEAFRINAAAAKDETQIHTHMCYCEFNDIMDSIAALDADVITIETSRSDMELLESFEAFDYPNEIGPGVYDIHSPNVPSVEWIEALLKKAAQRIPAQRLWVNPDCGLKTRGWPETRAALANMVKAAHNLRQAE.

5-methyltetrahydropteroyltri-L-glutamate is bound by residues 17-20 (RELK) and Lys-117. L-homocysteine contacts are provided by residues 431–433 (IGS) and Glu-484. L-methionine contacts are provided by residues 431–433 (IGS) and Glu-484. Residues 515–516 (RC) and Trp-561 contribute to the 5-methyltetrahydropteroyltri-L-glutamate site. Residue Asp-599 coordinates L-homocysteine. Asp-599 is a binding site for L-methionine. Glu-605 is a binding site for 5-methyltetrahydropteroyltri-L-glutamate. His-641, Cys-643, and Glu-665 together coordinate Zn(2+). The active-site Proton donor is His-694. Cys-726 contacts Zn(2+).

The protein belongs to the vitamin-B12 independent methionine synthase family. It depends on Zn(2+) as a cofactor.

It catalyses the reaction 5-methyltetrahydropteroyltri-L-glutamate + L-homocysteine = tetrahydropteroyltri-L-glutamate + L-methionine. It functions in the pathway amino-acid biosynthesis; L-methionine biosynthesis via de novo pathway; L-methionine from L-homocysteine (MetE route): step 1/1. Its function is as follows. Catalyzes the transfer of a methyl group from 5-methyltetrahydrofolate to homocysteine resulting in methionine formation. This is 5-methyltetrahydropteroyltriglutamate--homocysteine methyltransferase from Salmonella arizonae (strain ATCC BAA-731 / CDC346-86 / RSK2980).